The primary structure comprises 252 residues: Trans-aconitate 2-methyltransferase (252 aa).

Belongs to the methyltransferase superfamily. Tam family.

The protein localises to the cytoplasm. The catalysed reaction is trans-aconitate + S-adenosyl-L-methionine = (E)-3-(methoxycarbonyl)pent-2-enedioate + S-adenosyl-L-homocysteine. In terms of biological role, catalyzes the S-adenosylmethionine monomethyl esterification of trans-aconitate. The polypeptide is Trans-aconitate 2-methyltransferase (Escherichia coli O6:H1 (strain CFT073 / ATCC 700928 / UPEC)).